The sequence spans 207 residues: Large ribosomal subunit protein uL4 (207 aa).

The disordered stretch occupies residues 49-75; sequence HAVKNRSAVSGGGRKPWKQKGTGRARA.

The protein belongs to the universal ribosomal protein uL4 family. In terms of assembly, part of the 50S ribosomal subunit.

Its function is as follows. One of the primary rRNA binding proteins, this protein initially binds near the 5'-end of the 23S rRNA. It is important during the early stages of 50S assembly. It makes multiple contacts with different domains of the 23S rRNA in the assembled 50S subunit and ribosome. Functionally, forms part of the polypeptide exit tunnel. This Leuconostoc mesenteroides subsp. mesenteroides (strain ATCC 8293 / DSM 20343 / BCRC 11652 / CCM 1803 / JCM 6124 / NCDO 523 / NBRC 100496 / NCIMB 8023 / NCTC 12954 / NRRL B-1118 / 37Y) protein is Large ribosomal subunit protein uL4.